Reading from the N-terminus, the 367-residue chain is Biotin--protein ligase 1, chloroplastic (367 aa).

Residues 1 to 37 (MEAVRSTTTLSNFHLLNILVLRSLKPLHRLSFSFSAS) constitute a chloroplast transit peptide. The BPL/LPL catalytic domain maps to 105–289 (IITHRFGRFL…KFEKFFDLFM (185 aa)). Biotin-binding positions include 122–124 (STH), glutamine 145, 149–151 (RGR), and lysine 220.

This sequence belongs to the biotin--protein ligase family. Expressed in roots, leaves, stems, flowers, siliques and seeds.

Its subcellular location is the plastid. The protein resides in the chloroplast. It is found in the cytoplasm. The protein localises to the cytosol. The catalysed reaction is apo-[3-methylcrotonoyl-CoA:carbon-dioxide ligase (ADP-forming)] + biotin + ATP = holo-[3-methylcrotonoyl-CoA:carbon-dioxide ligase (ADP-forming)] + AMP + diphosphate + H(+). It catalyses the reaction biotin + L-lysyl-[protein] + ATP = N(6)-biotinyl-L-lysyl-[protein] + AMP + diphosphate + H(+). Its function is as follows. Plays a major role in biotin-dependent carboxylase biotinylation. Catalyzes the addition of biotin to the biotin carboxyl carrier protein (BCCP) subunit of acetyl-CoA carboxylase. Can also biotinylate methylcrotonyl-CoA carboxylase. Is responsible for most, if not all, biotin--protein ligase activity in Arabidopsis. Is essential for plant viability and required for ovule development. The polypeptide is Biotin--protein ligase 1, chloroplastic (Arabidopsis thaliana (Mouse-ear cress)).